The chain runs to 78 residues: UPF0349 protein SAHV_0934 (78 aa).

Belongs to the UPF0349 family.

This Staphylococcus aureus (strain Mu3 / ATCC 700698) protein is UPF0349 protein SAHV_0934.